We begin with the raw amino-acid sequence, 140 residues long: Large ribosomal subunit protein uL14 (140 aa).

This sequence belongs to the universal ribosomal protein uL14 family.

The sequence is that of Large ribosomal subunit protein uL14 (RpL23) from Drosophila melanogaster (Fruit fly).